The sequence spans 137 residues: Large ribosomal subunit protein uL16 (137 aa).

The protein belongs to the universal ribosomal protein uL16 family. In terms of assembly, part of the 50S ribosomal subunit.

Its function is as follows. Binds 23S rRNA and is also seen to make contacts with the A and possibly P site tRNAs. This is Large ribosomal subunit protein uL16 from Bartonella quintana (strain Toulouse) (Rochalimaea quintana).